A 268-amino-acid polypeptide reads, in one-letter code: Tubulin-specific chaperone C (268 aa).

One can recognise a C-CAP/cofactor C-like domain in the interval 98–255 (PAYTTTLKKH…SAFAFEDFDI (158 aa)).

The protein localises to the cytoplasm. Its subcellular location is the cytoskeleton. Tubulin-folding protein; involved in the early step of the tubulin folding pathway. The sequence is that of Tubulin-specific chaperone C (CIN2) from Saccharomyces cerevisiae (strain ATCC 204508 / S288c) (Baker's yeast).